The primary structure comprises 364 residues: Aminomethyltransferase (364 aa).

It belongs to the GcvT family. In terms of assembly, the glycine cleavage system is composed of four proteins: P, T, L and H.

It catalyses the reaction N(6)-[(R)-S(8)-aminomethyldihydrolipoyl]-L-lysyl-[protein] + (6S)-5,6,7,8-tetrahydrofolate = N(6)-[(R)-dihydrolipoyl]-L-lysyl-[protein] + (6R)-5,10-methylene-5,6,7,8-tetrahydrofolate + NH4(+). Functionally, the glycine cleavage system catalyzes the degradation of glycine. The chain is Aminomethyltransferase from Shewanella oneidensis (strain ATCC 700550 / JCM 31522 / CIP 106686 / LMG 19005 / NCIMB 14063 / MR-1).